We begin with the raw amino-acid sequence, 760 residues long: Formate acetyltransferase 1 (760 aa).

Residues 3–625 (ELNEKLATAW…KTGNTPDGRR (623 aa)) enclose the PFL domain. N6-acetyllysine; alternate is present on Lys63. Residue Lys63 is modified to N6-succinyllysine; alternate. Lys107 is modified (N6-succinyllysine). Residue Lys117 is modified to N6-acetyllysine; alternate. At Lys117 the chain carries N6-succinyllysine; alternate. At Lys124 the chain carries N6-succinyllysine. Position 195 is an N6-acetyllysine; alternate (Lys195). N6-succinyllysine; alternate is present on Lys195. Cys419 (S-acetylcysteine intermediate) is an active-site residue. Cys420 serves as the catalytic Cysteine radical intermediate. Position 454 is an N6-acetyllysine; alternate (Lys454). The residue at position 454 (Lys454) is an N6-succinyllysine; alternate. At Lys467 the chain carries N6-succinyllysine. An N6-acetyllysine mark is found at Lys541 and Lys591. The 129-residue stretch at 632–760 (PGANPMHGRD…VITRTFTQSM (129 aa)) folds into the Glycine radical domain. An N6-succinyllysine modification is found at Lys654. The residue at position 735 (Gly735) is a Glycine radical.

It belongs to the glycyl radical enzyme (GRE) family. PFL subfamily. In terms of assembly, homodimer. Interacts specifically with FocA.

It is found in the cytoplasm. It carries out the reaction formate + acetyl-CoA = pyruvate + CoA. It participates in fermentation; pyruvate fermentation; formate from pyruvate: step 1/1. Catalyzes the conversion of pyruvate to formate and acetyl-CoA. In addition, may be involved in the control of the activity of the formate channel FocA, via direct interaction with FocA. This Escherichia coli (strain K12) protein is Formate acetyltransferase 1 (pflB).